The chain runs to 366 residues: D-alanine--D-alanine ligase (366 aa).

The ATP-grasp domain occupies 149-358 (KIAFDHAGLP…FSELVDTLIQ (210 aa)). An ATP-binding site is contributed by 185–240 (ETTLEYPCFVKPANLGSSVGIAKVRSRSELETALDNAASYDRRIIVEAGVEAKELE). Positions 311, 325, and 327 each coordinate Mg(2+).

This sequence belongs to the D-alanine--D-alanine ligase family. Mg(2+) serves as cofactor. Mn(2+) is required as a cofactor.

It localises to the cytoplasm. It carries out the reaction 2 D-alanine + ATP = D-alanyl-D-alanine + ADP + phosphate + H(+). It participates in cell wall biogenesis; peptidoglycan biosynthesis. In terms of biological role, cell wall formation. This Trichodesmium erythraeum (strain IMS101) protein is D-alanine--D-alanine ligase.